Consider the following 320-residue polypeptide: Cytosolic Fe-S cluster assembly factor NUBP1 (320 aa).

N-acetylmethionine is present on Met1. Residues Cys8, Cys22, Cys25, and Cys31 each contribute to the [4Fe-4S] cluster site. 62 to 69 (GKGGVGKS) serves as a coordination point for ATP. Cys235 and Cys238 together coordinate [4Fe-4S] cluster. Ser319 is modified (phosphoserine).

It belongs to the Mrp/NBP35 ATP-binding proteins family. NUBP1/NBP35 subfamily. In terms of assembly, heterotetramer of 2 NUBP1 and 2 NUBP2 chains. Interacts with KIFC1. Interacts with NUBP2. Interacts with the BBS/CCT complex subunit CCT1. [4Fe-4S] cluster serves as cofactor.

Its subcellular location is the cytoplasm. It is found in the nucleus. The protein localises to the cell projection. It localises to the cytoskeleton. The protein resides in the cilium axoneme. Its subcellular location is the cilium basal body. It is found in the microtubule organizing center. The protein localises to the centrosome. It localises to the centriole. Its function is as follows. Component of the cytosolic iron-sulfur (Fe/S) protein assembly (CIA) machinery. Required for maturation of extramitochondrial Fe-S proteins. The NUBP1-NUBP2 heterotetramer forms a Fe-S scaffold complex, mediating the de novo assembly of an Fe-S cluster and its transfer to target apoproteins. Implicated in the regulation of centrosome duplication. Negatively regulates cilium formation and structure. The protein is Cytosolic Fe-S cluster assembly factor NUBP1 of Homo sapiens (Human).